The sequence spans 874 residues: Putative disease resistance protein At5g05400 (874 aa).

Residues 22–74 (LSRNQNRFRNLVDHVAALKKTVRQLEARRDDLLKRIKVQEDRGLNLLDEVQQW) are a coiled coil. Residues 139–434 (AQKGPIPKVE…GQGIILGSKG (296 aa)) form the NB-ARC domain. 182–189 (GMGGVGKT) is an ATP binding site. LRR repeat units lie at residues 483–505 (QKNVLVVEANAQLRDIPKIEDQK), 506–527 (AVRRMSLIYNQIEEACESLHCP), 528–548 (KLETLLLRDNRLRKISREFLS), 552–574 (ILMVLDLSLNPNLIELPSFSPLY), 575–597 (SLRFLNLSCTGITSLPDGLYALR), 598–620 (NLLYLNLEHTYMLKRIYEIHDLP), and 621–642 (NLEVLKLYASGIDITDKLVRQI).

It belongs to the disease resistance NB-LRR family.

Potential disease resistance protein. This Arabidopsis thaliana (Mouse-ear cress) protein is Putative disease resistance protein At5g05400.